Consider the following 260-residue polypeptide: MTDISVQSNTALESSETTHFGFTTVAKEEKVAKVAQVFHSVAAKYDIMNDLMSGGIHRLWKRFTIDCSGARPGQRVLDLGGGTGDLTAKFSRIVGEKGHVILADINNSMLNVGRDKLRDSGIVGNVHYVQANAEELPFPDDYFDIITISFCLRNVTDKDKALRSMFRVLKPGGRLLVLEFSKPVFDPLSKVYDAYSFHLLPKMGELVANDADSYRYLAESIRMHPDQETLKGMMQEAGFENTSYYNLTGGIVALHRGYKF.

Residues Thr83, Asp104, 132 to 133, and Ser149 each bind S-adenosyl-L-methionine; that span reads NA.

This sequence belongs to the class I-like SAM-binding methyltransferase superfamily. MenG/UbiE family.

The catalysed reaction is a 2-demethylmenaquinol + S-adenosyl-L-methionine = a menaquinol + S-adenosyl-L-homocysteine + H(+). It catalyses the reaction a 2-methoxy-6-(all-trans-polyprenyl)benzene-1,4-diol + S-adenosyl-L-methionine = a 5-methoxy-2-methyl-3-(all-trans-polyprenyl)benzene-1,4-diol + S-adenosyl-L-homocysteine + H(+). It participates in quinol/quinone metabolism; menaquinone biosynthesis; menaquinol from 1,4-dihydroxy-2-naphthoate: step 2/2. Its pathway is cofactor biosynthesis; ubiquinone biosynthesis. Functionally, methyltransferase required for the conversion of demethylmenaquinol (DMKH2) to menaquinol (MKH2) and the conversion of 2-polyprenyl-6-methoxy-1,4-benzoquinol (DDMQH2) to 2-polyprenyl-3-methyl-6-methoxy-1,4-benzoquinol (DMQH2). In Vibrio vulnificus (strain CMCP6), this protein is Ubiquinone/menaquinone biosynthesis C-methyltransferase UbiE.